The following is a 221-amino-acid chain: Eukaryotic translation initiation factor NCBP (221 aa).

Belongs to the eukaryotic initiation factor 4E family. EIF4F is a multi-subunit complex, the composition of which varies with external and internal environmental conditions. It is composed of at least EIF4A, EIF4E and EIF4G. EIF4E is also known to interact with other partners. In higher plants two isoforms of EIF4F have been identified, named isoform EIF4F and isoform EIF(iso)4F. Isoform EIF4F has subunits p220 and p26, whereas isoform EIF(iso)4F has subunits p82 and p28.

Recognizes and binds the 7-methylguanosine-containing mRNA cap during an early step in the initiation of protein synthesis and facilitates ribosome binding by inducing the unwinding of the mRNAs secondary structures. The protein is Eukaryotic translation initiation factor NCBP (NCBP) of Arabidopsis thaliana (Mouse-ear cress).